Reading from the N-terminus, the 1088-residue chain is RNA-directed RNA polymerase (1088 aa).

The 187-residue stretch at 501 to 687 (LSYGDVTRFL…AKRYIAGGKI (187 aa)) folds into the RdRp catalytic domain.

Belongs to the reoviridae RNA-directed RNA polymerase family. As to quaternary structure, interacts with VP3 (Potential). Interacts with VP2; this interaction activates VP1. Interacts with NSP5; this interaction is probably necessary for the formation of functional virus factories. Interacts with NSP2; this interaction is weak. It depends on Mg(2+) as a cofactor.

Its subcellular location is the virion. The catalysed reaction is RNA(n) + a ribonucleoside 5'-triphosphate = RNA(n+1) + diphosphate. In terms of biological role, RNA-directed RNA polymerase that is involved in both transcription and genome replication. Together with VP3 capping enzyme, forms an enzyme complex positioned near the channels situated at each of the five-fold vertices of the core. Following infection, the outermost layer of the virus is lost, leaving a double-layered particle (DLP) made up of the core and VP6 shell. VP1 then catalyzes the transcription of fully conservative plus-strand genomic RNAs that are extruded through the DLP's channels into the cytoplasm where they function as mRNAs for translation of viral proteins. One copy of each of the viral (+)RNAs is also recruited during core assembly, together with newly synthesized polymerase complexes and VP2. The polymerase of these novo-formed particles catalyzes the synthesis of complementary minus-strands leading to dsRNA formation. To do so, the polymerase specifically recognizes and binds 4 bases 5'-UGUG-3' in the conserved 3'-sequence of plus-strand RNA templates. VP2 presumably activates the autoinhibited VP1-RNA complex to coordinate packaging and genome replication. Once dsRNA synthesis is complete, the polymerase switches to the transcriptional mode, thus providing secondary transcription. This is RNA-directed RNA polymerase from Bos taurus (Bovine).